The following is a 727-amino-acid chain: Cadmium-transporting ATPase (727 aa).

The HMA domain maps to 12–75 (EMNVYRVQGF…AGAFENLKVS (64 aa)). Cd(2+) is bound by residues C23 and C26. 5 helical membrane passes run 106–126 (STLL…FVNG), 130–150 (LVTS…LFKV), 171–191 (IGAT…LFAI), 336–356 (IIMV…GGSW), and 364–384 (LAVL…ISIV). D415 (4-aspartylphosphate intermediate) is an active-site residue. Transmembrane regions (helical) follow at residues 672 to 694 (LNII…LLVI) and 699 to 721 (TLWI…SLRL).

This sequence belongs to the cation transport ATPase (P-type) (TC 3.A.3) family. Type IB subfamily.

The protein localises to the cell membrane. The enzyme catalyses Cd(2+)(in) + ATP + H2O = Cd(2+)(out) + ADP + phosphate + H(+). Inhibited by the antibiotic bafilomycin A1. Partially inhibited by DCCD, nigericin and FCCP. Its function is as follows. Couples the hydrolysis of ATP with the export of cadmium. Involved in cadmium resistance. This is Cadmium-transporting ATPase from Staphylococcus aureus.